Reading from the N-terminus, the 279-residue chain is Putative pyruvate, phosphate dikinase regulatory protein (279 aa).

156 to 163 (GISRVGKT) contributes to the ADP binding site.

Belongs to the pyruvate, phosphate/water dikinase regulatory protein family. PDRP subfamily.

The enzyme catalyses N(tele)-phospho-L-histidyl/L-threonyl-[pyruvate, phosphate dikinase] + ADP = N(tele)-phospho-L-histidyl/O-phospho-L-threonyl-[pyruvate, phosphate dikinase] + AMP + H(+). It carries out the reaction N(tele)-phospho-L-histidyl/O-phospho-L-threonyl-[pyruvate, phosphate dikinase] + phosphate + H(+) = N(tele)-phospho-L-histidyl/L-threonyl-[pyruvate, phosphate dikinase] + diphosphate. Bifunctional serine/threonine kinase and phosphorylase involved in the regulation of the pyruvate, phosphate dikinase (PPDK) by catalyzing its phosphorylation/dephosphorylation. This is Putative pyruvate, phosphate dikinase regulatory protein from Chloroflexus aurantiacus (strain ATCC 29366 / DSM 635 / J-10-fl).